The following is a 394-amino-acid chain: Putative bacilysin exporter BacE (394 aa).

11 helical membrane passes run 11 to 31, 43 to 63, 69 to 89, 92 to 112, 142 to 162, 166 to 186, 215 to 235, 244 to 264, 288 to 308, 332 to 352, and 353 to 373; these read LLYGQALSFMGDYCVLPALLI, SGVIVVRSIPMVFQPFLGVLV, IKIMLWTDIIRGIIFLGLTFL, GEYPLIFLALLFITYGSGVFF, IIVGAAAGGLFLLGGSVELAV, GVTYLVSAFFISRIKLQFVPI, MFTMITMALLWGVVYSYFPIV, IGNFILTFCIGFGGFIGAALV, LFLFTPIFAVSVIAAILFFIA, IFSVAEASIGLCISIGSMFIN, and ILSAPVIMGLIVVIVCGLFLH.

This sequence belongs to the major facilitator superfamily. Drug:H(+) antiporter-3 (DHA3) (TC 2.A.1.21) family.

The protein localises to the cell membrane. Its function is as follows. Part of the bacilysin biosynthesis operon. May be involved in self-resistance to bacilysin by permitting efflux of this antibiotic. The sequence is that of Putative bacilysin exporter BacE (bacE) from Bacillus subtilis (strain 168).